A 338-amino-acid chain; its full sequence is 5-dehydro-2-deoxygluconokinase (338 aa).

The protein belongs to the carbohydrate kinase PfkB family.

The catalysed reaction is 5-dehydro-2-deoxy-D-gluconate + ATP = 6-phospho-5-dehydro-2-deoxy-D-gluconate + ADP + H(+). It functions in the pathway polyol metabolism; myo-inositol degradation into acetyl-CoA; acetyl-CoA from myo-inositol: step 5/7. Its function is as follows. Catalyzes the phosphorylation of 5-dehydro-2-deoxy-D-gluconate (2-deoxy-5-keto-D-gluconate or DKG) to 6-phospho-5-dehydro-2-deoxy-D-gluconate (DKGP). This is 5-dehydro-2-deoxygluconokinase from Mesomycoplasma hyopneumoniae (strain 232) (Mycoplasma hyopneumoniae).